The chain runs to 261 residues: tRNA pseudouridine synthase A (261 aa).

Asp51 acts as the Nucleophile in catalysis. Residue Tyr109 participates in substrate binding.

The protein belongs to the tRNA pseudouridine synthase TruA family. In terms of assembly, homodimer.

The catalysed reaction is uridine(38/39/40) in tRNA = pseudouridine(38/39/40) in tRNA. Formation of pseudouridine at positions 38, 39 and 40 in the anticodon stem and loop of transfer RNAs. This is tRNA pseudouridine synthase A from Idiomarina loihiensis (strain ATCC BAA-735 / DSM 15497 / L2-TR).